A 315-amino-acid chain; its full sequence is Glutaminase (315 aa).

The substrate site is built by S70, N120, E166, N173, Y197, Y249, and V267.

It belongs to the glutaminase family. In terms of assembly, homotetramer.

The enzyme catalyses L-glutamine + H2O = L-glutamate + NH4(+). The protein is Glutaminase of Rhizobium meliloti (strain 1021) (Ensifer meliloti).